The primary structure comprises 459 residues: Elongation factor 1-alpha (459 aa).

A N,N,N-trimethylglycine modification is found at Gly-2. An N6,N6-dimethyllysine; alternate modification is found at Lys-3. N6-methyllysine; alternate is present on Lys-3. Positions 5–239 constitute a tr-type G domain; the sequence is KSHINVVVIG…DAIDPPSRPT (235 aa). Residues 14 to 21 are G1; sequence GHVDSGKS. 14–21 contributes to the GTP binding site; it reads GHVDSGKS. Lys-30 is subject to N6-methyllysine. Positions 70 to 74 are G2; sequence GITID. Lys-79 carries the N6,N6,N6-trimethyllysine modification. Residues 91–94 form a G3 region; it reads DAPG. Residues 91–95 and 153–156 each bind GTP; these read DAPGH and NKMD. Residues 153–156 are G4; that stretch reads NKMD. Positions 192–194 are G5; the sequence is SGF. The residue at position 315 (Lys-315) is an N6,N6-dimethyllysine; alternate. The residue at position 315 (Lys-315) is an N6-methyllysine; alternate. Lys-389 bears the N6-methyllysine mark.

The protein belongs to the TRAFAC class translation factor GTPase superfamily. Classic translation factor GTPase family. EF-Tu/EF-1A subfamily.

It is found in the cytoplasm. Its function is as follows. This protein promotes the GTP-dependent binding of aminoacyl-tRNA to the A-site of ribosomes during protein biosynthesis. The polypeptide is Elongation factor 1-alpha (TEF1) (Aureobasidium pullulans (Black yeast)).